The sequence spans 327 residues: cAMP-dependent protein kinase regulatory subunit (327 aa).

The interval methionine 1 to isoleucine 47 is disordered. Residues methionine 1–isoleucine 65 form a dimerization and phosphorylation region. Residues arginine 27–isoleucine 31 carry the Pseudophosphorylation motif motif. Residue serine 32 is modified to Phosphoserine. Residues methionine 66–serine 188, glutamate 136, arginine 145, isoleucine 189–serine 327, glutamate 262, and arginine 271 contribute to the 3',5'-cyclic AMP site.

This sequence belongs to the cAMP-dependent kinase regulatory chain family. In Dictyostelium the holoenzyme is a dimer composed of a regulatory (R) and a catalytic (C) subunit. In the presence of cAMP it dissociates into the active C subunit and an R monomer. In other eukaryotes the holoenzyme is a tetramer composed of 2 regulatory (R) and 2 catalytic (C) subunits. In the presence of cAMP it dissociates into active monomeric C subunits and an R dimer. Post-translationally, the pseudophosphorylation site binds to the substrate-binding region of the catalytic chain but is not phosphorylated. The physiological significance of phosphorylations by other kinases is unclear.

This chain is cAMP-dependent protein kinase regulatory subunit (pkaR), found in Dictyostelium discoideum (Social amoeba).